We begin with the raw amino-acid sequence, 232 residues long: MENIVNLKNIFVFYGKKKILNNISFKISHGKIITILGPNGSGKSTLARVILGLILPSHGKLIKHKKLRMSYVPQKIFFDINIPITVEKFMNLNSFFKKNNVHKFLQKVNAEHLLKKSIHNLSGGEIQKVLLARSLLNKPHLIVLDEPTQGLDINGQNILYDLITKIHGILSCSIIIISHDLHIVMAKTDEVICLNRSILCYGTPKKISDHPSFIEMFGCYNEKKRAIYKHNH.

The ABC transporter domain occupies 5–220 (VNLKNIFVFY…PSFIEMFGCY (216 aa)). An ATP-binding site is contributed by 37-44 (GPNGSGKS).

It belongs to the ABC transporter superfamily. Zinc importer (TC 3.A.1.15.5) family. As to quaternary structure, the complex is composed of two ATP-binding proteins (ZnuC), two transmembrane proteins (ZnuB) and a solute-binding protein (ZnuA).

It is found in the cell membrane. It catalyses the reaction Zn(2+)(out) + ATP(in) + H2O(in) = Zn(2+)(in) + ADP(in) + phosphate(in) + H(+)(in). Its function is as follows. Part of the ABC transporter complex ZnuABC involved in zinc import. Responsible for energy coupling to the transport system. In Wigglesworthia glossinidia brevipalpis, this protein is Zinc import ATP-binding protein ZnuC.